A 415-amino-acid chain; its full sequence is Histidine--tRNA ligase (415 aa).

It belongs to the class-II aminoacyl-tRNA synthetase family. In terms of assembly, homodimer.

It is found in the cytoplasm. The enzyme catalyses tRNA(His) + L-histidine + ATP = L-histidyl-tRNA(His) + AMP + diphosphate + H(+). This Gluconacetobacter diazotrophicus (strain ATCC 49037 / DSM 5601 / CCUG 37298 / CIP 103539 / LMG 7603 / PAl5) protein is Histidine--tRNA ligase.